An 838-amino-acid polypeptide reads, in one-letter code: Ribonuclease Z (838 aa).

The residue at position 824 (Ser-824) is a Phosphoserine.

Belongs to the RNase Z family. As to quaternary structure, homodimer. Zn(2+) serves as cofactor.

Its subcellular location is the cytoplasm. The protein localises to the nucleus. The catalysed reaction is Endonucleolytic cleavage of RNA, removing extra 3' nucleotides from tRNA precursor, generating 3' termini of tRNAs. A 3'-hydroxy group is left at the tRNA terminus and a 5'-phosphoryl group is left at the trailer molecule.. Functionally, zinc phosphodiesterase, which displays some tRNA 3'-processing endonuclease activity. Probably involved in tRNA maturation, by removing a 3'-trailer from precursor tRNA. The sequence is that of Ribonuclease Z (TRZ1) from Saccharomyces cerevisiae (strain ATCC 204508 / S288c) (Baker's yeast).